A 291-amino-acid polypeptide reads, in one-letter code: Undecaprenyl-diphosphatase (291 aa).

8 helical membrane passes run 1-21, 48-68, 102-122, 126-146, 162-182, 203-223, 236-256, and 267-287; these read MFII…LTEF, SAFT…AWVF, LHVL…DDFI, LFSV…MIIA, INYF…WPGF, SDFT…LSLL, FYIL…KTFL, and FAIY…GFGI.

Belongs to the UppP family.

The protein resides in the cell membrane. It catalyses the reaction di-trans,octa-cis-undecaprenyl diphosphate + H2O = di-trans,octa-cis-undecaprenyl phosphate + phosphate + H(+). Functionally, catalyzes the dephosphorylation of undecaprenyl diphosphate (UPP). Confers resistance to bacitracin. This Staphylococcus aureus (strain MSSA476) protein is Undecaprenyl-diphosphatase.